The following is a 163-amino-acid chain: Nodulin-13 (163 aa).

The kinetin site is built by Gln-68 and Tyr-82. 2 residues coordinate N(6)-dimethylallyladenine: Gln-68 and Tyr-82. Residues Gln-68, Tyr-82, and Tyr-133 each contribute to the trans-zeatin site.

This sequence belongs to the BetVI family. As to quaternary structure, homodimer. As to expression, expressed in nodules, but not in leaves, stems, flowers and roots. Specifically located in the nodule cortex.

Functionally, may be involved in nodule organogenesis rather in the processes related to nitrogen fixation or interactions with the bacteria. May regulate nodulation by controlling the levels of freely available cytokinins. The protein is Nodulin-13 (N13) of Medicago truncatula (Barrel medic).